The chain runs to 355 residues: MKSRPQEFQEDFYIPIPLDTNNITALSPFLVPQDHLGGSGIFMIMTVFMLFLFIGGTSINVLTIVCTVQYKKLRSHLNYILVNLAISNLLVSTVGSFTAFVSFLNRYFIFGPTACKIEGFVATLGGMVSLWSLSVVAFERWLVICKPVGNFSFKGTHAIIGCALTWFFALLASTPPLFGWSRYIPEGLQCSCGPDWYTTENKYNNESYVMFLFCFCFGFPFTVILFCYGQLLFTLKSAAKAQADSASTQKAEREVTKMVVVMVMGFLVCWLPYASFALWVVFNRGQSFDLRLGTIPSCFSKASTVYNPVIYVFMNKQFRSCMMKLIFCGKSPFGDDEEASSSSQVTQVSSVGPEK.

Residues 1 to 41 are Extracellular-facing; that stretch reads MKSRPQEFQEDFYIPIPLDTNNITALSPFLVPQDHLGGSGI. N-linked (GlcNAc...) asparagine glycosylation is present at N22. Residues 42-66 traverse the membrane as a helical segment; the sequence is FMIMTVFMLFLFIGGTSINVLTIVC. The Cytoplasmic portion of the chain corresponds to 67 to 78; the sequence is TVQYKKLRSHLN. A helical membrane pass occupies residues 79 to 104; the sequence is YILVNLAISNLLVSTVGSFTAFVSFL. Over 105 to 118 the chain is Extracellular; that stretch reads NRYFIFGPTACKIE. The cysteines at positions 115 and 192 are disulfide-linked. The helical transmembrane segment at 119 to 138 threads the bilayer; it reads GFVATLGGMVSLWSLSVVAF. The Cytoplasmic segment spans residues 139-157; the sequence is ERWLVICKPVGNFSFKGTH. Residues 158–181 traverse the membrane as a helical segment; that stretch reads AIIGCALTWFFALLASTPPLFGWS. The Extracellular segment spans residues 182 to 207; it reads RYIPEGLQCSCGPDWYTTENKYNNES. N205 is a glycosylation site (N-linked (GlcNAc...) asparagine). The chain crosses the membrane as a helical span at residues 208 to 235; the sequence is YVMFLFCFCFGFPFTVILFCYGQLLFTL. Residues 236-257 are Cytoplasmic-facing; the sequence is KSAAKAQADSASTQKAEREVTK. The helical transmembrane segment at 258 to 281 threads the bilayer; that stretch reads MVVVMVMGFLVCWLPYASFALWVV. Residues 282-289 lie on the Extracellular side of the membrane; it reads FNRGQSFD. A helical transmembrane segment spans residues 290 to 314; it reads LRLGTIPSCFSKASTVYNPVIYVFM. K301 is subject to N6-(retinylidene)lysine. Over 315–355 the chain is Cytoplasmic; sequence NKQFRSCMMKLIFCGKSPFGDDEEASSSSQVTQVSSVGPEK. A disordered region spans residues 334-355; it reads GDDEEASSSSQVTQVSSVGPEK. Over residues 340–355 the composition is skewed to low complexity; sequence SSSSQVTQVSSVGPEK.

This sequence belongs to the G-protein coupled receptor 1 family. Opsin subfamily. Post-translationally, phosphorylated on some or all of the serine and threonine residues present in the C-terminal region. The color pigments are found in the cone photoreceptor cells.

It localises to the membrane. Its function is as follows. Visual pigments are the light-absorbing molecules that mediate vision. They consist of an apoprotein, opsin, covalently linked to cis-retinal. This Psalidodon fasciatus (Banded astyanax) protein is Blue-sensitive opsin (B23).